A 57-amino-acid chain; its full sequence is Large ribosomal subunit protein bL32 (57 aa).

Positions 1 to 19 are enriched in basic residues; the sequence is MATPKRRMSRANTRSRRAQ. The disordered stretch occupies residues 1 to 20; that stretch reads MATPKRRMSRANTRSRRAQW.

Belongs to the bacterial ribosomal protein bL32 family.

The chain is Large ribosomal subunit protein bL32 from Mycobacterium leprae (strain Br4923).